The following is a 404-amino-acid chain: Cysteine desulfurase IscS (404 aa).

Pyridoxal 5'-phosphate-binding positions include alanine 75–threonine 76, asparagine 155, glutamine 183, and serine 203–histidine 205. The residue at position 206 (lysine 206) is an N6-(pyridoxal phosphate)lysine. Threonine 243 is a binding site for pyridoxal 5'-phosphate. Cysteine 328 (cysteine persulfide intermediate) is an active-site residue. A [2Fe-2S] cluster-binding site is contributed by cysteine 328.

Belongs to the class-V pyridoxal-phosphate-dependent aminotransferase family. NifS/IscS subfamily. As to quaternary structure, homodimer. Forms a heterotetramer with IscU, interacts with other sulfur acceptors. Pyridoxal 5'-phosphate serves as cofactor.

It localises to the cytoplasm. The enzyme catalyses (sulfur carrier)-H + L-cysteine = (sulfur carrier)-SH + L-alanine. Its pathway is cofactor biosynthesis; iron-sulfur cluster biosynthesis. Functionally, master enzyme that delivers sulfur to a number of partners involved in Fe-S cluster assembly, tRNA modification or cofactor biosynthesis. Catalyzes the removal of elemental sulfur atoms from cysteine to produce alanine. Functions as a sulfur delivery protein for Fe-S cluster synthesis onto IscU, an Fe-S scaffold assembly protein, as well as other S acceptor proteins. The chain is Cysteine desulfurase IscS from Pseudomonas entomophila (strain L48).